A 420-amino-acid polypeptide reads, in one-letter code: Phosphoribosylamine--glycine ligase (420 aa).

The region spanning 108 to 314 (KQFMEKYAIP…FAALIDALLH (207 aa)) is the ATP-grasp domain. Position 134–195 (134–195 (LNERGVPIVI…EDFLAGEEFS (62 aa))) interacts with ATP. Residues Glu-284 and Asn-286 each coordinate Mg(2+).

This sequence belongs to the GARS family. Requires Mg(2+) as cofactor. The cofactor is Mn(2+).

The enzyme catalyses 5-phospho-beta-D-ribosylamine + glycine + ATP = N(1)-(5-phospho-beta-D-ribosyl)glycinamide + ADP + phosphate + H(+). It participates in purine metabolism; IMP biosynthesis via de novo pathway; N(1)-(5-phospho-D-ribosyl)glycinamide from 5-phospho-alpha-D-ribose 1-diphosphate: step 2/2. This chain is Phosphoribosylamine--glycine ligase, found in Listeria monocytogenes serovar 1/2a (strain ATCC BAA-679 / EGD-e).